The primary structure comprises 364 residues: MRIVISGGGTGGHIYPALAFIKEVKRLHPDVEFLYIGTENGLEKKIVERENIPFKAIEISGFKRKLSFDNVKTVMRFLKGVQKSKSYLKEFKPDAVIGTGGYVCGPVVYAASKLKIPTIIHEQNSLPGITNKFLARYVNKVAICFDEAKAHFPSEKVVFTGNPRASEVVSIKEGKSLKEFGLDENKKTVLIFGGSRGAAPINRAVIEMQEGLKAKNYQLLYITGEVHYEKVLNELKEKGLASNMITKPFLHQMPEYLKSIDVIVARAGATTIAEVTALGIPTIFIPSPYVTANHQEINARSLEKHDAAIVLRESELTGDRLLHAIDEIAGNEEKLNQMSRLTKELGVPDAATRLYNVLKEITTT.

Residues 10–12, Asn-124, Ser-195, and Gln-295 each bind UDP-N-acetyl-alpha-D-glucosamine; that span reads TGG.

The protein belongs to the glycosyltransferase 28 family. MurG subfamily.

Its subcellular location is the cell membrane. The enzyme catalyses di-trans,octa-cis-undecaprenyl diphospho-N-acetyl-alpha-D-muramoyl-L-alanyl-D-glutamyl-meso-2,6-diaminopimeloyl-D-alanyl-D-alanine + UDP-N-acetyl-alpha-D-glucosamine = di-trans,octa-cis-undecaprenyl diphospho-[N-acetyl-alpha-D-glucosaminyl-(1-&gt;4)]-N-acetyl-alpha-D-muramoyl-L-alanyl-D-glutamyl-meso-2,6-diaminopimeloyl-D-alanyl-D-alanine + UDP + H(+). The protein operates within cell wall biogenesis; peptidoglycan biosynthesis. Its function is as follows. Cell wall formation. Catalyzes the transfer of a GlcNAc subunit on undecaprenyl-pyrophosphoryl-MurNAc-pentapeptide (lipid intermediate I) to form undecaprenyl-pyrophosphoryl-MurNAc-(pentapeptide)GlcNAc (lipid intermediate II). In Bacillus pumilus (strain SAFR-032), this protein is UDP-N-acetylglucosamine--N-acetylmuramyl-(pentapeptide) pyrophosphoryl-undecaprenol N-acetylglucosamine transferase.